The primary structure comprises 493 residues: Beta-hexosaminidase Amuc_2018 (493 aa).

A signal peptide spans 1-21 (MARPLPILGGILLSFSPPAEA). Residue R122 participates in substrate binding. Active-site charge relay system residues include D151 and H214. The Zn(2+) site is built by C227 and C247. Substrate is bound at residue D278. The active-site Charge relay system is the E279. The Zn(2+) site is built by C288 and C291. Residues W345, 373-375 (YLD), and 421-423 (WAE) contribute to the substrate site.

Belongs to the glycosyl hydrolase 20 family.

It catalyses the reaction Hydrolysis of terminal non-reducing N-acetyl-D-hexosamine residues in N-acetyl-beta-D-hexosaminides.. With respect to regulation, significantly inhibited by the addition of sodium dodecyl sulfate (SDS), but not by EDTA, urea, 2-mercaptoethanol or Triton X-100. Strongly inhibited by Cu2(+) ions, in case of which the activity is decreased by 70%. No significant inhibition with Al(3+), Fe(3+), Ca(2+), Cd(2+), Mg(2+), Mn(2+), Ni(2+) and Zn(2+) ions. Strongly inhibited by PugNAc (O-(2-acetamido-2-deoxy-D-glucopyranosylideneamino) N-phenylcarbamate) in the sub-micromolar concentration range. PugNAc at a concentration of 0.5 mM decreases the activity by 50% and the addition of 1 mM PugNAc fully inhibits the enzyme. No significant reduction in the activity by alkylation using N-ethylmaleimide or 2-iodoacetamide. Hydrolyzes terminal GlcNAc residues from terminally unbranched N-glycans and from chitobiose. Hydrolyzes beta-1,6-linked N-acetylglucosamine and beta-1,4-linked N-acetylgalactosamine from pNP-alpha-GalNAc[beta1,3Gal]beta1,6GlcNAc and pNP-beta-GlcNAc-beta1,4-GalNAc substrates, respectively, as well as beta-1,2-linked N-acetylglucosamine units from the non-reducing end of N-glycans. Hydrolyzes GlcNAc residues linked to alpha1,3- or alpha1,6-mannose branch, but has low activity on substrates with more than one GlcNAc residue on one of the mannose branches. Releases terminal GlcNAc moieties from the N-glycopeptide Gly-Glu-Asn-(GlcNAc2Man3GlcNAc2)-Arg with high efficiency. Has moderate hydrolytic activity on the chitobiose moiety of N-glycopeptide substrate Gly-Glu-Asn-(GlcNAc2)-Arg. Does not hydrolyze GlcNAc residues from N-glycan structures bearing a bisecting GlcNAc moiety (beta1,4-linked GlcNAc to the beta1,4-linked core mannose). Potentially capable of cleaving the specific glycoside linkages in the process of mucin degradation in human intestinal tract. Hydrolyzes synthetic substrate pNP-beta-GlcNAc with high activity and pNP-beta-GalNAc to a lesser extent. Does not hydrolyze pNP-beta-glucose, pNP-beta-galactose, pNP-alpha-glucose, pNP-alpha-galactose, pNP-alpha-GlcNAc or pNP-alpha-fucose. The sequence is that of Beta-hexosaminidase Amuc_2018 from Akkermansia muciniphila (strain ATCC BAA-835 / DSM 22959 / JCM 33894 / BCRC 81048 / CCUG 64013 / CIP 107961 / Muc).